Reading from the N-terminus, the 469-residue chain is ATP-dependent protease ATPase subunit HslU (469 aa).

ATP contacts are provided by residues I24, 66-71 (GVGKTE), D282, E347, and R419.

The protein belongs to the ClpX chaperone family. HslU subfamily. In terms of assembly, a double ring-shaped homohexamer of HslV is capped on each side by a ring-shaped HslU homohexamer. The assembly of the HslU/HslV complex is dependent on binding of ATP.

It localises to the cytoplasm. Its function is as follows. ATPase subunit of a proteasome-like degradation complex; this subunit has chaperone activity. The binding of ATP and its subsequent hydrolysis by HslU are essential for unfolding of protein substrates subsequently hydrolyzed by HslV. HslU recognizes the N-terminal part of its protein substrates and unfolds these before they are guided to HslV for hydrolysis. The protein is ATP-dependent protease ATPase subunit HslU of Listeria welshimeri serovar 6b (strain ATCC 35897 / DSM 20650 / CCUG 15529 / CIP 8149 / NCTC 11857 / SLCC 5334 / V8).